Here is a 481-residue protein sequence, read N- to C-terminus: Inosine-5'-monophosphate dehydrogenase (481 aa).

CBS domains are found at residues 92–148 and 152–209; these read VIND…SKKV and MTKM…PEAN. NAD(+) is bound by residues aspartate 244 and 293-295; that span reads GIG. K(+) contacts are provided by glycine 295 and glycine 297. Residue serine 298 coordinates IMP. Cysteine 300 provides a ligand contact to K(+). Cysteine 300 functions as the Thioimidate intermediate in the catalytic mechanism. Residues 333 to 335, 356 to 357, and 380 to 384 contribute to the IMP site; these read DGG, GS, and YRGMG. Arginine 396 functions as the Proton acceptor in the catalytic mechanism. Glutamate 410 contributes to the IMP binding site. 3 residues coordinate K(+): glutamate 464, serine 465, and histidine 466.

This sequence belongs to the IMPDH/GMPR family. In terms of assembly, homotetramer. The cofactor is K(+).

The catalysed reaction is IMP + NAD(+) + H2O = XMP + NADH + H(+). The protein operates within purine metabolism; XMP biosynthesis via de novo pathway; XMP from IMP: step 1/1. With respect to regulation, mycophenolic acid (MPA) is a non-competitive inhibitor that prevents formation of the closed enzyme conformation by binding to the same site as the amobile flap. In contrast, mizoribine monophosphate (MZP) is a competitive inhibitor that induces the closed conformation. MPA is a potent inhibitor of mammalian IMPDHs but a poor inhibitor of the bacterial enzymes. MZP is a more potent inhibitor of bacterial IMPDH. In terms of biological role, catalyzes the conversion of inosine 5'-phosphate (IMP) to xanthosine 5'-phosphate (XMP), the first committed and rate-limiting step in the de novo synthesis of guanine nucleotides, and therefore plays an important role in the regulation of cell growth. This Helicobacter pylori (strain J99 / ATCC 700824) (Campylobacter pylori J99) protein is Inosine-5'-monophosphate dehydrogenase.